The chain runs to 31 residues: MLGNMNVFMAVLGIILFSGFLAAYFSHKWDD.

The Periplasmic portion of the chain corresponds to 1 to 4 (MLGN). Residues 5–25 (MNVFMAVLGIILFSGFLAAYF) traverse the membrane as a helical segment. The Cytoplasmic segment spans residues 26–31 (SHKWDD).

As to quaternary structure, interacts with MgtA.

It localises to the cell inner membrane. Its function is as follows. Modulates intracellular Mg(2+) levels to maintain cellular integrity upon Mg(2+) limitation. Acts by binding and stabilizing the Mg(2+) transporter MgtA, thereby leading to increased intracellular level of Mg(2+). May inhibit FtsH proteolysis of MgtA. This Escherichia coli (strain K12) protein is Small protein MgtS.